A 138-amino-acid chain; its full sequence is MSGFSSRPLSTHLRQPSLAPPQGQSPALLARVNEKKAELENLKELRDLSAAVAAQMEALEQKLSTLSSGTEAIATVLANWHNVLRAISMASAKIPEPKEETEENTVPLPQTLVRIPTEHAPALQAHAEGATEEESGRG.

Residues 1–14 (MSGFSSRPLSTHLR) show a composition bias toward polar residues. 2 disordered regions span residues 1–25 (MSGFSSRPLSTHLRQPSLAPPQGQS) and 116–138 (PTEHAPALQAHAEGATEEESGRG).

This sequence belongs to the DASH complex DAD2 family. As to quaternary structure, component of the DASH complex consisting of ASK1, DAD1, DAD2, DAD3, DAD4, DAM1, DUO1, HSK3, SPC19 and SPC34, with a stoichiometry of one copy of each subunit per complex. Multiple DASH complexes oligomerize to form a ring that encircles spindle microtubules and organizes the rod-like NDC80 complexes of the outer kinetochore. DASH complex oligomerization strengthens microtubule attachments. On cytoplasmic microtubules, DASH complexes appear to form patches instead of rings.

It localises to the chromosome. The protein localises to the centromere. The protein resides in the kinetochore. Its subcellular location is the cytoplasm. It is found in the cytoskeleton. It localises to the spindle. The protein localises to the nucleus. Its function is as follows. Component of the DASH complex that connects microtubules with kinetochores and couples microtubule depolymerisation to chromosome movement; it is involved in retrieving kinetochores to the spindle poles before their re-orientation on the spindle in early mitosis and allows microtubule depolymerization to pull chromosomes apart and resist detachment during anaphase. Kinetochores, consisting of a centromere-associated inner segment and a microtubule-contacting outer segment, play a crucial role in chromosome segregation by mediating the physical connection between centromeric DNA and microtubules. Kinetochores also serve as an input point for the spindle assembly checkpoint, which delays anaphase until all chromosomes have bioriented on the mitotic spindle. The sequence is that of DASH complex subunit DAD2 from Chaetomium thermophilum (strain DSM 1495 / CBS 144.50 / IMI 039719) (Thermochaetoides thermophila).